We begin with the raw amino-acid sequence, 84 residues long: uncharacterized protein (84 aa).

Residues 7–23 (AFSGVIALYGGYLYLRL) form a helical membrane-spanning segment.

Its subcellular location is the membrane. This is an uncharacterized protein from Haemophilus influenzae (strain ATCC 51907 / DSM 11121 / KW20 / Rd).